The following is a 201-amino-acid chain: Large ribosomal subunit protein uL4 (201 aa).

Residues 44-71 (RAQKTRAEVSGSGKKPWRQKGTGRARSG) form a disordered region.

It belongs to the universal ribosomal protein uL4 family. In terms of assembly, part of the 50S ribosomal subunit.

Its function is as follows. One of the primary rRNA binding proteins, this protein initially binds near the 5'-end of the 23S rRNA. It is important during the early stages of 50S assembly. It makes multiple contacts with different domains of the 23S rRNA in the assembled 50S subunit and ribosome. In terms of biological role, forms part of the polypeptide exit tunnel. This chain is Large ribosomal subunit protein uL4, found in Actinobacillus succinogenes (strain ATCC 55618 / DSM 22257 / CCUG 43843 / 130Z).